The sequence spans 115 residues: Putative membrane protein insertion efficiency factor (115 aa).

This sequence belongs to the UPF0161 family.

The protein localises to the cell membrane. Functionally, could be involved in insertion of integral membrane proteins into the membrane. This chain is Putative membrane protein insertion efficiency factor, found in Mycolicibacterium paratuberculosis (strain ATCC BAA-968 / K-10) (Mycobacterium paratuberculosis).